The following is a 4244-amino-acid chain: Tenascin-X (4244 aa).

A signal peptide spans 1 to 23 (MMPAQYALTSSLVLLVLLSTARA). The disordered stretch occupies residues 27 to 57 (SSRSNVTLPAPRPPPQPGGHTVGAGVGSPSS). The N-linked (GlcNAc...) asparagine glycan is linked to Asn31. One can recognise an EGF-like 1; incomplete domain in the interval 156–168 (CSCEPGWGGPTCS). The segment at 169–189 (DPTDAEIPPSSPPSASGSCPD) is disordered. EGF-like domains follow at residues 183-213 (ASGS…GPSC), 214-244 (GWPS…GPDC), 245-275 (SQRS…GDDC), 276-306 (GMRS…GEDC), 307-337 (GVRS…GEDC), 338-368 (GTRS…GEDC), 369-399 (STRT…GDDC), 400-430 (GVRS…GTDC), 431-461 (GSRA…GEDC), 462-492 (GVRS…GRDC), 493-523 (GTRA…GEDC), 524-554 (GSRR…GEDC), 555-585 (STRS…GEDC), 586-616 (GVRQ…SEDC), 617-647 (SIRT…GPTC), 648-679 (ATRM…EDCG), 684-714 (PASA…GPDC), and 715-746 (AIQT…EDCG). 54 cysteine pairs are disulfide-bonded: Cys187–Cys197, Cys191–Cys202, Cys204–Cys213, Cys218–Cys228, Cys222–Cys233, Cys235–Cys244, Cys249–Cys259, Cys253–Cys264, Cys266–Cys275, Cys280–Cys290, Cys284–Cys295, Cys297–Cys306, Cys311–Cys321, Cys315–Cys326, Cys328–Cys337, Cys342–Cys352, Cys346–Cys357, Cys359–Cys368, Cys373–Cys383, Cys377–Cys388, Cys390–Cys399, Cys404–Cys414, Cys408–Cys419, Cys421–Cys430, Cys435–Cys445, Cys439–Cys450, Cys452–Cys461, Cys466–Cys476, Cys470–Cys481, Cys483–Cys492, Cys497–Cys507, Cys501–Cys512, Cys514–Cys523, Cys528–Cys538, Cys532–Cys543, Cys545–Cys554, Cys559–Cys569, Cys563–Cys574, Cys576–Cys585, Cys590–Cys600, Cys594–Cys605, Cys607–Cys616, Cys621–Cys631, Cys625–Cys636, Cys638–Cys647, Cys652–Cys662, Cys656–Cys667, Cys669–Cys678, Cys688–Cys698, Cys692–Cys703, Cys705–Cys714, Cys719–Cys729, Cys723–Cys734, and Cys736–Cys745. Residues 926-956 (TGSSPLGLLGTTDEPPPSGPSTTQGAQAPLL) form a disordered region. Fibronectin type-III domains are found at residues 959–1051 (RPQE…IMDK), 1064–1153 (RLGE…PQSD), 1161–1249 (HLGN…APER), 1263–1352 (LLGE…PQED), 1374–1468 (LLGE…TPPA), 1476–1572 (RLGE…TEAS), 1574–1669 (PPLE…RGDA), 1674–1764 (PPRL…ARSA), 1778–1868 (LGEE…REET), and 1883–1971 (HLGE…VPEE). The segment at 1340–1372 (PESVVAKTAPQEDVDETPSPTELGTEAPESPEE) is disordered. A Cell attachment site motif is present at residues 1666 to 1668 (RGD). The tract at residues 1752–1777 (PLTADGTTEARSAMDDTGTKRPPKPR) is disordered. Residues 1968 to 1990 (VPEEEKPSEPPTATPEPPIKPRL) are disordered. Positions 1976 to 1987 (EPPTATPEPPIK) are enriched in pro residues. 5 Fibronectin type-III domains span residues 1989–2089 (RLGE…SMEA), 2097–2185 (LLGE…APEE), 2196–2296 (RLGQ…TEPP), 2305–2398 (RLEE…TPSP), and 2408–2502 (PPEE…PQED). Residues 2281-2304 (APGKDEEMAPASTEPPTPEPPIKP) form a disordered region. Residues 2495 to 2542 (GVTAPQEDVDETPSPTEPGTEAPGPPEEPLLGELTVTGSSPDSLSLSW) are disordered. Positions 2506-2516 (TPSPTEPGTEA) are enriched in low complexity. Fibronectin type-III domains lie at 2519 to 2617 (PPEE…TTQA), 2625 to 2723 (PPIK…TPSP), 2733 to 2840 (PPEE…TTPE), 2841 to 2939 (PPNK…TPAP), 2949 to 3042 (PPEE…APKD), 3062 to 3153 (RLGE…TPSP), 3168 to 3260 (LLGE…TPLP), 3264 to 3355 (RLGE…TKPS), 3357 to 3446 (RLGE…PLEK), 3451 to 3544 (HLGE…TPAP), 3553 to 3647 (PPEE…LAPA), 3657 to 3754 (RLSQ…TLSP), 3758 to 3847 (SPRD…VPDG), 3848 to 3934 (PTQL…TGLE), and 3935 to 4025 (APRD…LRIP). The span at 2530–2542 (VTGSSPDSLSLSW) shows a compositional bias: polar residues. 2 disordered regions span residues 2824-2847 (PEDE…KPRL) and 2933-2969 (EEET…DSLS). Over residues 2937–2946 (PAPTEPSTEA) the composition is skewed to low complexity. The segment covering 2960 to 2969 (VTGSSPDSLS) has biased composition (polar residues). Disordered regions lie at residues 3536 to 3559 (APEE…EPRL) and 3636 to 3662 (LSAE…SQLS). N-linked (GlcNAc...) asparagine glycans are attached at residues Asn3855, Asn3908, and Asn3920. Residues 4021–4236 (GLRIPFPRDC…FTEMKLRPRN (216 aa)) form the Fibrinogen C-terminal domain. The cysteines at positions 4030 and 4060 are disulfide-linked. Asn4095 carries N-linked (GlcNAc...) asparagine glycosylation. A disulfide bridge connects residues Cys4182 and Cys4195.

The protein belongs to the tenascin family. Homotrimer. Interacts with type I, III and V collagens and tropoelastin via its 29th fibronectin type-III domain. In terms of tissue distribution, highly expressed in fetal adrenal, in fetal testis, fetal smooth, striated and cardiac muscle. Isoform XB-short is only expressed in the adrenal gland.

The protein resides in the secreted. Its subcellular location is the extracellular space. It is found in the extracellular matrix. In terms of biological role, appears to mediate interactions between cells and the extracellular matrix. Substrate-adhesion molecule that appears to inhibit cell migration. Accelerates collagen fibril formation. May play a role in supporting the growth of epithelial tumors. This Homo sapiens (Human) protein is Tenascin-X.